Here is a 295-residue protein sequence, read N- to C-terminus: Protease HtpX (295 aa).

2 helical membrane passes run 4-24 and 41-61; these read ILLF…TLSL and SSLL…SLFI. His147 is a Zn(2+) binding site. Glu148 is an active-site residue. His151 is a Zn(2+) binding site. 2 helical membrane passes run 158 to 178 and 199 to 219; these read VTLA…ARII and VATI…VMWF. Glu224 provides a ligand contact to Zn(2+).

This sequence belongs to the peptidase M48B family. Zn(2+) serves as cofactor.

It is found in the cell inner membrane. The sequence is that of Protease HtpX from Pseudomonas putida (strain ATCC 47054 / DSM 6125 / CFBP 8728 / NCIMB 11950 / KT2440).